The sequence spans 118 residues: Small ribosomal subunit protein eS24 (118 aa).

The protein belongs to the eukaryotic ribosomal protein eS24 family.

In Sulfolobus acidocaldarius (strain ATCC 33909 / DSM 639 / JCM 8929 / NBRC 15157 / NCIMB 11770), this protein is Small ribosomal subunit protein eS24.